A 472-amino-acid chain; its full sequence is 3-isopropylmalate dehydratase large subunit (472 aa).

[4Fe-4S] cluster contacts are provided by C352, C413, and C416.

This sequence belongs to the aconitase/IPM isomerase family. LeuC type 1 subfamily. Heterodimer of LeuC and LeuD. Requires [4Fe-4S] cluster as cofactor.

The enzyme catalyses (2R,3S)-3-isopropylmalate = (2S)-2-isopropylmalate. It functions in the pathway amino-acid biosynthesis; L-leucine biosynthesis; L-leucine from 3-methyl-2-oxobutanoate: step 2/4. In terms of biological role, catalyzes the isomerization between 2-isopropylmalate and 3-isopropylmalate, via the formation of 2-isopropylmaleate. The chain is 3-isopropylmalate dehydratase large subunit from Laribacter hongkongensis (strain HLHK9).